Here is a 98-residue protein sequence, read N- to C-terminus: Large ribosomal subunit protein bL25 (98 aa).

The disordered stretch occupies residues 1 to 23 (MANFVLNAQARAEDKQGKGASRR).

This sequence belongs to the bacterial ribosomal protein bL25 family. In terms of assembly, part of the 50S ribosomal subunit; part of the 5S rRNA/L5/L18/L25 subcomplex. Contacts the 5S rRNA. Binds to the 5S rRNA independently of L5 and L18.

Functionally, this is one of the proteins that binds to the 5S RNA in the ribosome where it forms part of the central protuberance. This is Large ribosomal subunit protein bL25 from Acinetobacter baumannii (strain AB307-0294).